Reading from the N-terminus, the 315-residue chain is MSLSRREFVKLCSAGVAGLGISQIYHPGIVHAMTEGAKKAPVIWVQGQGCTGCSVSLLNAVHPRIKEILLDVISLEFHPTVMASEGEMALAHMYEIAEKFNGNFFLLVEGAIPTAKEGRYCIVGETLDAKGHHHEVTMMELIRDLAPKSLATVAVGTCSAYGGIPAAEGNVTGSKSVRDFFADEKIEKLLVNVPGCPPHPDWMVGTLVAAWSHVLNPTEHPLPELDDDGRPLLFFGDNIHENCPYLDKYDNSEFAETFTKPGCKAELGCKGPSTYADCAKRRWNNGINWCVENAVCIGCVEPDFPDGKSPFYVAE.

Residues 1–32 (MSLSRREFVKLCSAGVAGLGISQIYHPGIVHA) constitute a signal peptide (tat-type signal). Residues Cys50, Cys53, Cys158, Cys196, His240, Cys243, Cys263, Cys269, Cys278, Cys290, Cys296, and Cys299 each contribute to the [4Fe-4S] cluster site.

This sequence belongs to the [NiFe]/[NiFeSe] hydrogenase small subunit family. As to quaternary structure, heterodimer of a large and a small subunit. The cofactor is [4Fe-4S] cluster. Predicted to be exported by the Tat system. The position of the signal peptide cleavage has been experimentally proven.

Its subcellular location is the periplasm. The catalysed reaction is H2 + A = AH2. This Desulfomicrobium baculatum (Desulfovibrio baculatus) protein is Periplasmic [NiFeSe] hydrogenase small subunit.